Here is a 441-residue protein sequence, read N- to C-terminus: Probable D-serine dehydratase (441 aa).

The residue at position 117 (Lys-117) is an N6-(pyridoxal phosphate)lysine.

The protein belongs to the serine/threonine dehydratase family. DsdA subfamily. Pyridoxal 5'-phosphate is required as a cofactor.

The catalysed reaction is D-serine = pyruvate + NH4(+). The protein is Probable D-serine dehydratase of Acinetobacter baylyi (strain ATCC 33305 / BD413 / ADP1).